The sequence spans 270 residues: Phosphatidate cytidylyltransferase (270 aa).

A run of 8 helical transmembrane segments spans residues 17–37 (FVVLCFVSYESLIGLVSAILI), 55–75 (FFYVILLALYPVLYGLVFEEP), 81–101 (ILFITGVVFSLITDKDPSQVF), 104–124 (VAAFSIALIYVTFFLSFFLPI), 129–149 (GAANALLVLTSTWVFDSFAYF), 170–190 (EGVIGGFLGVVIYTFLYRLVV), 193–213 (LLSVNVISFRTFLPFAATVAI), and 248–268 (IDGLLFVAPVSYIVFKILEGV).

This sequence belongs to the CDS family.

The protein resides in the cell membrane. The enzyme catalyses a 1,2-diacyl-sn-glycero-3-phosphate + CTP + H(+) = a CDP-1,2-diacyl-sn-glycerol + diphosphate. The protein operates within phospholipid metabolism; CDP-diacylglycerol biosynthesis; CDP-diacylglycerol from sn-glycerol 3-phosphate: step 3/3. The polypeptide is Phosphatidate cytidylyltransferase (cdsA) (Thermotoga maritima (strain ATCC 43589 / DSM 3109 / JCM 10099 / NBRC 100826 / MSB8)).